Consider the following 557-residue polypeptide: Urocanate hydratase (557 aa).

Residues 1-20 (MSNPRHNEREVRSPRGDELN) form a disordered region. Residues 52–53 (GG), Gln-130, 176–178 (GMG), Glu-196, Arg-201, 242–243 (NA), 263–267 (QTSAH), 273–274 (YL), and Tyr-322 each bind NAD(+). The active site involves Cys-410. Residue Gly-492 participates in NAD(+) binding.

It belongs to the urocanase family. NAD(+) serves as cofactor.

The protein resides in the cytoplasm. The catalysed reaction is 4-imidazolone-5-propanoate = trans-urocanate + H2O. The protein operates within amino-acid degradation; L-histidine degradation into L-glutamate; N-formimidoyl-L-glutamate from L-histidine: step 2/3. Its function is as follows. Catalyzes the conversion of urocanate to 4-imidazolone-5-propionate. This Brucella melitensis biotype 2 (strain ATCC 23457) protein is Urocanate hydratase.